The primary structure comprises 224 residues: Oxaloacetate tautomerase FAHD2, mitochondrial (224 aa).

Residues 1–30 (MATSMIQRLFKQGTKIVGVGLNYASHAKEL) constitute a mitochondrion transit peptide. E67, E69, and D98 together coordinate Mg(2+).

Belongs to the FAH family. It depends on Mg(2+) as a cofactor. Mn(2+) is required as a cofactor.

It localises to the mitochondrion. The enzyme catalyses oxaloacetate = enol-oxaloacetate. In terms of biological role, tautomerase that converts enol-oxaloacetate, a strong inhibitor of succinate dehydrogenase, to the physiological keto form of oxaloacetate. The chain is Oxaloacetate tautomerase FAHD2, mitochondrial from Arabidopsis thaliana (Mouse-ear cress).